Consider the following 460-residue polypeptide: tRNA modification GTPase MnmE (460 aa).

3 residues coordinate (6S)-5-formyl-5,6,7,8-tetrahydrofolate: arginine 29, glutamate 91, and lysine 132. The TrmE-type G domain maps to 227 to 383 (GISIALIGKT…LIDTIIKKCG (157 aa)). Position 237 (asparagine 237) interacts with K(+). GTP contacts are provided by residues 237 to 242 (NVGKSS), 256 to 262 (TNIPGTT), and 281 to 284 (DTAG). Position 241 (serine 241) interacts with Mg(2+). K(+) is bound by residues threonine 256, isoleucine 258, and threonine 261. Threonine 262 provides a ligand contact to Mg(2+). Lysine 460 provides a ligand contact to (6S)-5-formyl-5,6,7,8-tetrahydrofolate.

Belongs to the TRAFAC class TrmE-Era-EngA-EngB-Septin-like GTPase superfamily. TrmE GTPase family. Homodimer. Heterotetramer of two MnmE and two MnmG subunits. It depends on K(+) as a cofactor.

It is found in the cytoplasm. In terms of biological role, exhibits a very high intrinsic GTPase hydrolysis rate. Involved in the addition of a carboxymethylaminomethyl (cmnm) group at the wobble position (U34) of certain tRNAs, forming tRNA-cmnm(5)s(2)U34. This Prochlorococcus marinus (strain MIT 9215) protein is tRNA modification GTPase MnmE.